We begin with the raw amino-acid sequence, 324 residues long: Zinc metalloproteinase leucurolysin-B (324 aa).

The 119-residue stretch at 1 to 119 (DTVLLNRISH…LNPQCILNEP (119 aa)) folds into the Peptidase M12B domain. Residue D11 participates in Ca(2+) binding. 3 cysteine pairs are disulfide-bonded: C34/C114, C74/C98, and C76/C81. H59 lines the Zn(2+) pocket. E60 is an active-site residue. Residues H63 and H69 each contribute to the Zn(2+) site. The N-linked (GlcNAc...) asparagine glycan is linked to N97. Positions 114, 117, 129, 132, 134, 136, 139, and 142 each coordinate Ca(2+). The Disintegrin domain occupies 127 to 213 (PPVCGNELLE…QCPTDDFKRN (87 aa)). Disulfide bonds link C130–C159, C141–C154, C143–C149, C153–C176, C167–C173, C172–C198, C185–C205, C192–C224, C217–C229, C236–C286, C251–C295, C264–C274, and C281–C315. Residues 191–193 (ECD) carry the D/ECD-tripeptide motif. N-linked (GlcNAc...) asparagine glycosylation is found at N296 and N305.

This sequence belongs to the venom metalloproteinase (M12B) family. P-III subfamily. P-IIIa sub-subfamily. Monomer. The cofactor is Zn(2+). In terms of processing, N-glycosylated. The N-terminus is blocked. As to expression, expressed by the venom gland.

The protein resides in the secreted. Inhibited by EDTA, but not by PMSF. Pre-incubation with 2 mM DTT completely abolishes activity. In terms of biological role, snake venom zinc metalloproteinase that acts as a potent hemorrhagic toxin. Hydrolyzes the insulin B chain at the 14-Ala-|-Leu-15 bond but not the 16-Tyr-|-Leu-17 bond. Degrades the alpha-chain of fibrin and hydrolyzes the Aalpha-chain of fibrinogen (FGA) while leaving the beta and gamma chains unaffected. Degrades type-I collagen and its gelatin. Degrades the alpha-1 chain of type-IV collagen and its gelatin but not the alpha-2 chain. Degrades plasma fibronectin, plasma vitronectin and basement membrane enactin. It inhibits collagen-induced platelet aggregation. The protein is Zinc metalloproteinase leucurolysin-B of Bothrops leucurus (Whitetail lancehead).